The primary structure comprises 149 residues: Phosphoribosyl-AMP cyclohydrolase (149 aa).

Asp-92 is a Mg(2+) binding site. Cys-93 lines the Zn(2+) pocket. 2 residues coordinate Mg(2+): Asp-94 and Asp-96. Zn(2+) contacts are provided by Cys-111 and Cys-118.

The protein belongs to the PRA-CH family. Homodimer. Mg(2+) serves as cofactor. The cofactor is Zn(2+).

It is found in the cytoplasm. The enzyme catalyses 1-(5-phospho-beta-D-ribosyl)-5'-AMP + H2O = 1-(5-phospho-beta-D-ribosyl)-5-[(5-phospho-beta-D-ribosylamino)methylideneamino]imidazole-4-carboxamide. It functions in the pathway amino-acid biosynthesis; L-histidine biosynthesis; L-histidine from 5-phospho-alpha-D-ribose 1-diphosphate: step 3/9. Its function is as follows. Catalyzes the hydrolysis of the adenine ring of phosphoribosyl-AMP. In Rhizobium rhizogenes (strain K84 / ATCC BAA-868) (Agrobacterium radiobacter), this protein is Phosphoribosyl-AMP cyclohydrolase.